The chain runs to 299 residues: Acetaldehyde dehydrogenase 2 (299 aa).

Residue Cys-130 is the Acyl-thioester intermediate of the active site. NAD(+) is bound by residues 161-169 (SVGPGTRKN) and Asn-272.

It belongs to the acetaldehyde dehydrogenase family.

The enzyme catalyses acetaldehyde + NAD(+) + CoA = acetyl-CoA + NADH + H(+). The polypeptide is Acetaldehyde dehydrogenase 2 (Burkholderia lata (strain ATCC 17760 / DSM 23089 / LMG 22485 / NCIMB 9086 / R18194 / 383)).